Reading from the N-terminus, the 224-residue chain is Protein PLANT CADMIUM RESISTANCE 6 (224 aa).

A helical membrane pass occupies residues 131-151; the sequence is GMLYGLICCLFAIPCVYTCTF.

It belongs to the cornifelin family.

The protein localises to the membrane. Its function is as follows. May be involved in heavy metals transport. The sequence is that of Protein PLANT CADMIUM RESISTANCE 6 (PCR6) from Arabidopsis thaliana (Mouse-ear cress).